The sequence spans 911 residues: Protein translocase subunit SecA (911 aa).

ATP-binding positions include Q90, 108–112 (GEGKT), and D515. Positions 891, 893, 902, and 903 each coordinate Zn(2+).

The protein belongs to the SecA family. Monomer and homodimer. Part of the essential Sec protein translocation apparatus which comprises SecA, SecYEG and auxiliary proteins SecDF-YajC and YidC. It depends on Zn(2+) as a cofactor.

It is found in the cell inner membrane. Its subcellular location is the cytoplasm. It carries out the reaction ATP + H2O + cellular proteinSide 1 = ADP + phosphate + cellular proteinSide 2.. Its function is as follows. Part of the Sec protein translocase complex. Interacts with the SecYEG preprotein conducting channel. Has a central role in coupling the hydrolysis of ATP to the transfer of proteins into and across the cell membrane, serving both as a receptor for the preprotein-SecB complex and as an ATP-driven molecular motor driving the stepwise translocation of polypeptide chains across the membrane. This is Protein translocase subunit SecA from Blochmanniella pennsylvanica (strain BPEN).